Reading from the N-terminus, the 422-residue chain is Tyrosine--tRNA ligase (422 aa).

Tyr-37 contacts L-tyrosine. Positions 42-51 match the 'HIGH' region motif; it reads PTEESLHIGH. Positions 175 and 179 each coordinate L-tyrosine. The 'KMSKS' region signature appears at 235–239; that stretch reads KFGKT. Lys-238 lines the ATP pocket. The S4 RNA-binding domain maps to 357 to 414; that stretch reads KDLQEALVLTSLAQSRTQAKNMIISNSISINTEKIRKNHIFHEKDKLFGKFTLLSRGK.

This sequence belongs to the class-I aminoacyl-tRNA synthetase family. TyrS type 1 subfamily. As to quaternary structure, homodimer.

Its subcellular location is the cytoplasm. It catalyses the reaction tRNA(Tyr) + L-tyrosine + ATP = L-tyrosyl-tRNA(Tyr) + AMP + diphosphate + H(+). Catalyzes the attachment of tyrosine to tRNA(Tyr) in a two-step reaction: tyrosine is first activated by ATP to form Tyr-AMP and then transferred to the acceptor end of tRNA(Tyr). In Buchnera aphidicola subsp. Acyrthosiphon pisum (strain 5A), this protein is Tyrosine--tRNA ligase.